The sequence spans 246 residues: Probable phosphatase ASA_1316 (246 aa).

Zn(2+) contacts are provided by histidine 8, histidine 10, histidine 16, histidine 41, glutamate 74, histidine 102, histidine 132, aspartate 193, and histidine 195.

This sequence belongs to the PHP family. Zn(2+) is required as a cofactor.

The protein is Probable phosphatase ASA_1316 of Aeromonas salmonicida (strain A449).